A 499-amino-acid chain; its full sequence is Thioredoxin reductase 1, cytoplasmic (499 aa).

FAD contacts are provided by residues 22–23, 42–43, 58–59, and 63–67; these read SG, DF, TC, and SCIPK. Cysteine 59 and cysteine 64 are joined by a disulfide. Lysine 68 is subject to N6-succinyllysine. Position 131 is a phosphotyrosine (tyrosine 131). FAD contacts are provided by residues 131-132 and threonine 161; that span reads YG. Residues arginine 166, 198–204, 221–222, arginine 226, 226–228, 292–293, and lysine 315 each bind NADP(+); these read ASYVALE, RS, RGF, and GR. Residue tyrosine 200 participates in FAD binding. Residues aspartate 334, 341-343, and histidine 472 contribute to the FAD site; that span reads ELT. Glutamate 341 contacts NADP(+). Histidine 472 serves as the catalytic Proton acceptor. The cysteinyl-selenocysteine (Cys-Sec) cross-link spans 497–498; sequence CU. Residue selenocysteine 498 is a non-standard amino acid, selenocysteine.

It belongs to the class-I pyridine nucleotide-disulfide oxidoreductase family. In terms of assembly, homodimer. It depends on FAD as a cofactor. ISGylated.

It is found in the cytoplasm. The enzyme catalyses [thioredoxin]-dithiol + NADP(+) = [thioredoxin]-disulfide + NADPH + H(+). The catalysed reaction is H2O2 + NADPH + H(+) = NADP(+) + 2 H2O. Its function is as follows. Reduces disulfideprotein thioredoxin (Trx) to its dithiol-containing form. Homodimeric flavoprotein involved in the regulation of cellular redox reactions, growth and differentiation. Contains a selenocysteine residue at the C-terminal active site that is essential for catalysis. Also has reductase activity on hydrogen peroxide (H2O2). In Sus scrofa (Pig), this protein is Thioredoxin reductase 1, cytoplasmic (TXNRD1).